A 251-amino-acid polypeptide reads, in one-letter code: Insulin-induced gene 1 protein (251 aa).

Residues 1–58 (MQTLEEHCWSCSCTRGRDKKGTRLSTWLAQRAAKAMSSLNSLLSLAYHTLASSEGRSL) lie on the Cytoplasmic side of the membrane. A helical membrane pass occupies residues 59–81 (IRRSLVLFAVGVFLALVLNLLQI). Residues 82 to 100 (QRNVTLFPEEVIATIFSSA) are Extracellular-facing. The chain crosses the membrane as a helical span at residues 101-118 (WWVPPCCGTAAAVVGLLY). Over 119–133 (PCIDSHLGEPHKFKR) the chain is Cytoplasmic. Residues 134–156 (EWASVMRCIAVFVGINHASAKLD) form a helical membrane-spanning segment. Over 157–159 (FAN) the chain is Extracellular. The chain crosses the membrane as a helical span at residues 160–178 (NVQLSLTLAALSLGLWWTF). Topologically, residues 179–183 (DRSRS) are cytoplasmic. A helical transmembrane segment spans residues 184 to 205 (GLGLGITIAFLATLITQFLVYN). Residues 206–219 (GVYQYTSPDFLYIR) are Extracellular-facing. A helical transmembrane segment spans residues 220-237 (SWLPCIFFSGGVTVGNIG). Residues 238–251 (RQLAMGSSEKTHSD) lie on the Cytoplasmic side of the membrane. The short motif at 245–251 (SEKTHSD) is the KxHxx element.

Belongs to the INSIG family. In terms of assembly, interacts with scap; interaction is direct and only takes place in the presence of sterols; it prevents interaction between scap and the coat protein complex II (COPII). Associates with the SCAP-SREBP complex; association is mediated via its interaction with scap and only takes place in the presence of sterols.

It is found in the endoplasmic reticulum membrane. In terms of biological role, oxysterol-binding protein that mediates feedback control of cholesterol synthesis by controlling both endoplasmic reticulum to Golgi transport of scap and degradation of hmgcr. Acts as a negative regulator of cholesterol biosynthesis by mediating the retention of the SCAP-SREBP complex in the endoplasmic reticulum, thereby blocking the processing of sterol regulatory element-binding proteins (SREBPs). Binds oxysterol, including 25-hydroxycholesterol, regulating interaction with scap and retention of the SCAP-SREBP complex in the endoplasmic reticulum. In presence of oxysterol, interacts with scap, retaining the SCAP-SREBP complex in the endoplasmic reticulum, thereby preventing scap from escorting SREBPs to the Golgi. Sterol deprivation reduces oxysterol-binding, disrupting the interaction between insig1 and scap, thereby promoting Golgi transport of the SCAP-SREBP complex, followed by processing and nuclear translocation of SREBPs. Also regulates cholesterol synthesis by regulating degradation of hmgcr. This is Insulin-induced gene 1 protein from Xenopus tropicalis (Western clawed frog).